Reading from the N-terminus, the 183-residue chain is Gamma-crystallin N (183 aa).

Beta/gamma crystallin 'Greek key' domains follow at residues 6-46 (GKIT…RVES), 47-89 (GAWV…RPVG), 95-136 (FRID…KVYG), and 138-180 (GAWV…RRVL).

Belongs to the beta/gamma-crystallin family. In terms of assembly, monomer. Detected in the auditory hindbrain where it is highly expressed in the medial nucleus of the trapezoid body, but also present in other nuclei of the superior olivary complex.

In terms of biological role, crystallins are the dominant structural components of the vertebrate eye lens. Also plays an important role for integrity and function of auditory nuclei. The chain is Gamma-crystallin N from Rattus norvegicus (Rat).